Consider the following 260-residue polypeptide: NAD-capped RNA hydrolase NudC (260 aa).

Residues lysine 25 and arginine 69 each coordinate substrate. Positions 98 and 101 each coordinate Zn(2+). Residue glutamate 111 participates in substrate binding. Residues cysteine 116 and cysteine 119 each coordinate Zn(2+). Tyrosine 124 serves as a coordination point for substrate. A Nudix hydrolase domain is found at proline 125–threonine 248. The a divalent metal cation site is built by alanine 158, glutamate 174, and glutamate 178. Positions glycine 159–asparagine 180 match the Nudix box motif. Glutamine 192 to serine 199 is a substrate binding site. Residue glutamate 219 participates in a divalent metal cation binding. Residue alanine 241 participates in substrate binding.

Belongs to the Nudix hydrolase family. NudC subfamily. Homodimer. The cofactor is Mg(2+). Mn(2+) serves as cofactor. Requires Zn(2+) as cofactor.

It catalyses the reaction a 5'-end NAD(+)-phospho-ribonucleoside in mRNA + H2O = a 5'-end phospho-adenosine-phospho-ribonucleoside in mRNA + beta-nicotinamide D-ribonucleotide + 2 H(+). The catalysed reaction is NAD(+) + H2O = beta-nicotinamide D-ribonucleotide + AMP + 2 H(+). The enzyme catalyses NADH + H2O = reduced beta-nicotinamide D-ribonucleotide + AMP + 2 H(+). In terms of biological role, mRNA decapping enzyme that specifically removes the nicotinamide adenine dinucleotide (NAD) cap from a subset of mRNAs by hydrolyzing the diphosphate linkage to produce nicotinamide mononucleotide (NMN) and 5' monophosphate mRNA. The NAD-cap is present at the 5'-end of some mRNAs and stabilizes RNA against 5'-processing. Has preference for mRNAs with a 5'-end purine. Catalyzes the hydrolysis of a broad range of dinucleotide pyrophosphates. This Yersinia pseudotuberculosis serotype O:1b (strain IP 31758) protein is NAD-capped RNA hydrolase NudC.